The following is a 301-amino-acid chain: Protoheme IX farnesyltransferase (301 aa).

The next 9 membrane-spanning stretches (helical) occupy residues 34–54, 55–75, 102–121, 125–144, 152–172, 181–201, 222–242, 247–267, and 280–300; these read LVVFTAITGMLIAPGTIHPLI, GLVSTVCVALGAGAAGAFNMW, AWECGMVLATLSVFVMAIAV, SALLLAGSIFSYAVVYTMLL, IVIGGIAGAFPPVIGWASVSG, LFAIIFVWTPPHFWAIALLTL, SHILLYSIILAVVGATPGLFV, LYEILATGLSATFIAYAIAVF, and GLFKYSIYYLFLLFAVVIACV.

This sequence belongs to the UbiA prenyltransferase family. Protoheme IX farnesyltransferase subfamily.

It localises to the cell inner membrane. The catalysed reaction is heme b + (2E,6E)-farnesyl diphosphate + H2O = Fe(II)-heme o + diphosphate. Its pathway is porphyrin-containing compound metabolism; heme O biosynthesis; heme O from protoheme: step 1/1. Its function is as follows. Converts heme B (protoheme IX) to heme O by substitution of the vinyl group on carbon 2 of heme B porphyrin ring with a hydroxyethyl farnesyl side group. The polypeptide is Protoheme IX farnesyltransferase (Anaplasma marginale (strain Florida)).